The sequence spans 116 residues: NADH-ubiquinone oxidoreductase chain 3 (116 aa).

A run of 3 helical transmembrane segments spans residues 3–23 (LITTIITITITLSAVLATISF), 56–76 (FFLIAILFLLFDLEIALLLPL), and 85–105 (PALTLVWSTAVLALLTLGLIY).

This sequence belongs to the complex I subunit 3 family.

Its subcellular location is the mitochondrion membrane. The catalysed reaction is a ubiquinone + NADH + 5 H(+)(in) = a ubiquinol + NAD(+) + 4 H(+)(out). Core subunit of the mitochondrial membrane respiratory chain NADH dehydrogenase (Complex I) that is believed to belong to the minimal assembly required for catalysis. Complex I functions in the transfer of electrons from NADH to the respiratory chain. The immediate electron acceptor for the enzyme is believed to be ubiquinone. The protein is NADH-ubiquinone oxidoreductase chain 3 (MT-ND3) of Oncorhynchus masou (Cherry salmon).